A 1260-amino-acid polypeptide reads, in one-letter code: Paraclostridial mosquitocidal protein 1 (1260 aa).

Zn(2+) is bound at residue His-208. Residue Glu-209 is the Proton acceptor of the active site. Zn(2+) is bound by residues His-212 and Glu-248. Cys-395 and Cys-406 form a disulfide bridge. Positions 401-824 are translocation domain (TD); the sequence is NRVNICIDVN…NIQSIPDFDI (424 aa). The HCN stretch occupies residues 825 to 1065; it reads NALIDRLGIQ…SYFNSNILRD (241 aa). The segment at 1066–1260 is HCC; it reads FWGEPLEYNK…FVSEDEGWKE (195 aa).

This sequence belongs to the peptidase M27 family. The cofactor is Zn(2+).

It carries out the reaction Limited hydrolysis of proteins of the neuroexocytosis apparatus, synaptobrevins, SNAP25 or syntaxin. No detected action on small molecule substrates.. Its activity is regulated as follows. Preincubation with the metalloprotease inhibitor 1,10-phenanthroline before injection into Anopheles or Aedes decreases toxicity. Functionally, neurotoxin active against Anopheles but not Aedes mosquitoes upon oral ingestion; expression of the ptox operon (ntnh-orfX1-orfX2-orfX3-pmp1) in B.thuringiensis kills Anopheles but not Aedes mosquito 3rd instar larvae. The ntnh-pmp1 construct is about half as toxic. PMP1 is toxic when injected directly into Anopheles or Aedes mosquito 3rd instar larvae, larvae no longer move, suggesting they are paralyzed. Adult mosquitoes (Anopheles or Aedes) and Drosophila lose the ability to fly in a dose-dependent manner by 24 hours after injection with 100 pg neurotoxin. Not toxic upon injection in mice. In terms of biological role, neurotoxin that cleaves A.gambiae syntaxin 1a, probably hydrolyzing the '240-Glu-|-His-241' bond. Does not cleave A.gambiae n-synaptobrevin or SNAP-25, nor human syntaxin 1A. Its function is as follows. Responsible for host epithelial cell transcytosis, host nerve cell targeting and translocation of PMP1 light chain (LC) into host cytosol. Composed of 3 subdomains; the translocation domain (TD), and N-terminus and C-terminus of the receptor-binding domain (RBD), called HCN and HCC. The sequence is that of Paraclostridial mosquitocidal protein 1 from Paraclostridium bifermentans (Clostridium bifermentans).